Reading from the N-terminus, the 165-residue chain is Group 10 secretory phospholipase A2 (165 aa).

The signal sequence occupies residues 1-31 (MGPLPVCLPIMLLLLLPSLLLLLLLPGPGSG). Residues 32-42 (EASRILRVHRR) constitute a propeptide that is removed on maturation. Intrachain disulfides connect Cys53–Cys111, Cys67–Cys157, Cys69–Cys85, Cys84–Cys139, Cys90–Cys164, Cys91–Cys132, Cys100–Cys125, and Cys118–Cys130. 3 residues coordinate Ca(2+): Phe68, Gly70, and Gly72. Residue His88 is part of the active site. Residue Asp89 participates in Ca(2+) binding. Residue Asn113 is glycosylated (N-linked (GlcNAc...) asparagine). Residue Asp133 is part of the active site.

It belongs to the phospholipase A2 family. As to quaternary structure, interacts with PLA2R1; this interaction mediates PLA2G10 clearance and inactivation. Requires Ca(2+) as cofactor. In terms of tissue distribution, found in spleen, thymus, peripheral blood leukocytes, pancreas, lung, and colon. Expressed in neuronal fibers in dorsal root ganglia and in peripheral tissues including stomach, white adipose tissue and prostate (at protein level).

The protein localises to the secreted. Its subcellular location is the lysosome. It localises to the cytoplasmic vesicle. The protein resides in the secretory vesicle. It is found in the acrosome. It catalyses the reaction a 1,2-diacyl-sn-glycero-3-phosphocholine + H2O = a 1-acyl-sn-glycero-3-phosphocholine + a fatty acid + H(+). The catalysed reaction is 1-hexadecanoyl-2-(9Z-octadecenoyl)-sn-glycero-3-phosphocholine + H2O = 1-hexadecanoyl-sn-glycero-3-phosphocholine + (9Z)-octadecenoate + H(+). The enzyme catalyses 1-octadecanoyl-2-(5Z,8Z,11Z,14Z-eicosatetraenoyl)-sn-glycero-3-phosphocholine + H2O = 1-octadecanoyl-sn-glycero-3-phosphocholine + (5Z,8Z,11Z,14Z)-eicosatetraenoate + H(+). It carries out the reaction 1,2-dihexadecanoyl-sn-glycero-3-phosphocholine + H2O = 1-hexadecanoyl-sn-glycero-3-phosphocholine + hexadecanoate + H(+). It catalyses the reaction 1-hexadecanoyl-2-(9Z-octadecenoyl)-sn-glycero-3-phosphoglycerol + H2O = 1-hexadecanoyl-sn-glycero-3-phosphoglycerol + (9Z)-octadecenoate + H(+). The catalysed reaction is 1,2-dihexadecanoyl-sn-glycero-3-phospho-(1'-sn-glycerol) + H2O = 1-hexadecanoyl-sn-glycero-3-phospho-(1'-sn-glycerol) + hexadecanoate + H(+). The enzyme catalyses 1-hexadecanoyl-2-(9Z-octadecenoyl)-sn-glycero-3-phospho-L-serine + H2O = 1-hexadecanoyl-sn-glycero-3-phospho-L-serine + (9Z)-octadecenoate + H(+). It carries out the reaction 1-hexadecanoyl-2-(9Z,12Z-octadecadienoyl)-sn-glycero-3-phosphoethanolamine + H2O = 1-hexadecanoyl-sn-glycero-3-phosphoethanolamine + (9Z,12Z)-octadecadienoate + H(+). It catalyses the reaction 1-hexadecanoyl-2-(9Z-octadecenoyl)-sn-glycero-3-phosphate + H2O = 1-hexadecanoyl-sn-glycero-3-phosphate + (9Z)-octadecenoate + H(+). The catalysed reaction is 1-O-hexadecyl-2-acetyl-sn-glycero-3-phosphocholine + H2O = 1-O-hexadecyl-sn-glycero-3-phosphocholine + acetate + H(+). With respect to regulation, inhibited by methyl indoxam. Secretory calcium-dependent phospholipase A2 that primarily targets extracellular phospholipids. Hydrolyzes the ester bond of the fatty acyl group attached at sn-2 position of phospholipids with preference for phosphatidylcholines and phosphatidylglycerols over phosphatidylethanolamines. Preferentially releases sn-2 omega-6 and omega-3 polyunsaturated fatty acyl (PUFA) chains over saturated fatty acyls. Contributes to phospholipid remodeling of very low-density lipoprotein (VLDL), low-density lipoprotein (LDL) and high-density lipoprotein (HDL) particles. Hydrolyzes LDL phospholipids releasing unsaturated fatty acids that regulate macrophage differentiation toward foam cells. Efficiently hydrolyzes and inactivates platelet activating factor (PAF), a potent lipid mediator present in oxidized LDL. May act in an autocrine and paracrine manner. Secreted by lung epithelium, targets membrane phospholipids of infiltrating eosinophils, releasing arachidonate and boosting eicosanoid and cysteinyl leukotriene synthesis involved in airway inflammatory response. Secreted by gut epithelium, hydrolyzes dietary and biliary phosphatidylcholines in the gastrointestinal lumen. Plays a stem cell regulator role in colon epithelium. Within intracellular compartment, mediates Paneth-like cell differentiation and its stem cell supporting functions by inhibiting the Wnt signaling pathway in intestinal stem cell (ISC). Secreted in the intestinal lumen upon inflammation, acts in an autocrine way and promotes prostaglandin E2 synthesis that stimulates Wnt signaling pathway in ISCs and tissue regeneration. May participate in hair follicle morphogenesis by regulating phosphatidylethanolamines metabolism at the outermost epithelial layer and facilitating melanin synthesis. By releasing lysophosphatidylcholines (LPCs) at sperm acrosome, controls sperm cell capacitation, acrosome reaction and overall fertility. May promote neurite outgrowth in neuron fibers involved in nociception. Contributes to lipid remodeling of cellular membranes and generation of lipid mediators involved in pathogen clearance. Cleaves sn-2 fatty acyl chains of phosphatidylglycerols and phosphatidylethanolamines, which are major components of membrane phospholipids in bacteria. Displays bactericidal activity against Gram-positive bacteria by directly hydrolyzing phospholipids of the bacterial membrane. In pulmonary epithelium, may contribute to host defense response against adenoviral infection. Prevents adenovirus entry into host cells by hydrolyzing host cell plasma membrane, releasing C16:0 LPCs that inhibit virus-mediated membrane fusion and viral infection. Likely prevents adenoviral entry into the endosomes of host cells. May play a role in maturation and activation of innate immune cells including macrophages, group 2 innate lymphoid cells and mast cells. This is Group 10 secretory phospholipase A2 (PLA2G10) from Homo sapiens (Human).